Here is a 160-residue protein sequence, read N- to C-terminus: ATP synthase subunit delta, mitochondrial (160 aa).

The N-terminal 22 residues, M1–Y22, are a transit peptide targeting the mitochondrion.

In terms of assembly, F-type ATP synthases have 2 components, the catalytic core F(1) and the membrane-embedded component F(0), linked together by a central stalk and a peripheral stalk. The central stalk, also called rotor shaft, is often seen as part of F(1). The peripheral stalk is seen as part of F(0). F(0) contains the membrane channel next to the rotor. F-type ATP synthases form dimers but each monomer functions independently in ATP generation. The dimer consists of 18 different polypeptides: ATP1 (subunit alpha, part of F(1), 3 molecules per monomer), ATP2 (subunit beta, part of F(1), 3 molecules per monomer), ATP3 (subunit gamma, part of the central stalk), ATP4 (subunit b, part of the peripheral stalk), ATP5/OSCP (subunit 5/OSCP, part of the peripheral stalk), ATP6 (subunit a, part of the peripheral stalk), ATP7 (subunit d, part of the peripheral stalk), ATP8 (subunit 8, part of the peripheral stalk), OLI1 (subunit c, part of the rotor, 10 molecules per monomer), ATP14 (subunit h, part of the peripheral stalk), ATP15 (subunit epsilon, part of the central stalk), ATP16 (subunit delta, part of the central stalk), ATP17 (subunit f, part of the peripheral stalk), ATP18 (subunit i/j, part of the peripheral stalk). Dimer-specific subunits are ATP19 (subunit k, at interface between monomers), ATP20 (subunit g, at interface between monomers), TIM11 (subunit e, at interface between monomers). Also contains subunit L.

It is found in the mitochondrion inner membrane. In terms of biological role, mitochondrial membrane ATP synthase (F(1)F(0) ATP synthase or Complex V) produces ATP from ADP in the presence of a proton gradient across the membrane which is generated by electron transport complexes of the respiratory chain. F-type ATP synthases consist of two structural domains, F(1) - containing the extramembraneous catalytic core, and F(0) - containing the membrane proton channel, linked together by a central stalk and a peripheral stalk. During catalysis, ATP synthesis in the catalytic domain of F(1) is coupled via a rotary mechanism of the central stalk subunits to proton translocation. Part of the complex F(1) domain and the central stalk which is part of the complex rotary element. Rotation of the central stalk against the surrounding alpha/ATP1(3)beta/ATP2(3) subunits leads to hydrolysis of ATP in three separate catalytic sites on the beta/ATP2 subunits. The polypeptide is ATP synthase subunit delta, mitochondrial (Pichia angusta (Yeast)).